The chain runs to 437 residues: Bystin (437 aa).

The tract at residues 1-105 (MPKFKAARGV…DGSDDEDEEW (105 aa)) is disordered. Arg40 is modified (omega-N-methylarginine). Ser55 is subject to Phosphoserine. Basic and acidic residues predominate over residues 71-87 (AEHGTGDKPAAPRERTT). Ser98 carries the post-translational modification Phosphoserine. Position 156 is a phosphothreonine (Thr156). Phosphoserine occurs at positions 167 and 414.

The protein belongs to the bystin family. In terms of assembly, binds trophinin, tastin and cytokeratins. As to expression, found in the placenta from the sixth week of pregnancy. Was localized in the cytoplasm of the syncytiotrophoblast in the chorionic villi and in endometrial decidual cells at the uteroplacental interface. After week 10, the level decreased and then disappeared from placental villi.

It is found in the cytoplasm. The protein resides in the nucleus. It localises to the nucleolus. Functionally, required for processing of 20S pre-rRNA precursor and biogenesis of 40S ribosomal subunits. May be required for trophinin-dependent regulation of cell adhesion during implantation of human embryos. The protein is Bystin of Homo sapiens (Human).